The chain runs to 512 residues: Cobyric acid synthase (512 aa).

One can recognise a GATase cobBQ-type domain in the interval 254 to 455 (EIDIAVVKLP…LHGLFDNKAL (202 aa)). Cys-335 functions as the Nucleophile in the catalytic mechanism. His-447 is an active-site residue.

Belongs to the CobB/CobQ family. CobQ subfamily.

It functions in the pathway cofactor biosynthesis; adenosylcobalamin biosynthesis. Catalyzes amidations at positions B, D, E, and G on adenosylcobyrinic A,C-diamide. NH(2) groups are provided by glutamine, and one molecule of ATP is hydrogenolyzed for each amidation. In Desulforamulus reducens (strain ATCC BAA-1160 / DSM 100696 / MI-1) (Desulfotomaculum reducens), this protein is Cobyric acid synthase.